Here is a 247-residue protein sequence, read N- to C-terminus: Uridylate kinase (247 aa).

11–14 (KASG) serves as a coordination point for ATP. An involved in allosteric activation by GTP region spans residues 19 to 24 (GKQGFG). Position 53 (Gly-53) interacts with UMP. 2 residues coordinate ATP: Gly-54 and Arg-58. UMP is bound by residues Asp-73 and 134 to 141 (TGNPFFTT). ATP is bound by residues Thr-161, Gln-162, Tyr-167, and Asp-170.

It belongs to the UMP kinase family. As to quaternary structure, homohexamer.

It localises to the cytoplasm. It carries out the reaction UMP + ATP = UDP + ADP. It functions in the pathway pyrimidine metabolism; CTP biosynthesis via de novo pathway; UDP from UMP (UMPK route): step 1/1. Allosterically activated by GTP. Inhibited by UTP. Catalyzes the reversible phosphorylation of UMP to UDP. This chain is Uridylate kinase, found in Chelativorans sp. (strain BNC1).